The sequence spans 575 residues: Chaperonin CPN60-2, mitochondrial (575 aa).

The transit peptide at 1–32 (MHRFASGLASKARLARKGANQIASRSSWSRNY) directs the protein to the mitochondrion.

It belongs to the chaperonin (HSP60) family.

It is found in the mitochondrion. In terms of biological role, implicated in mitochondrial protein import and macromolecular assembly. May facilitate the correct folding of imported proteins. May also prevent misfolding and promote the refolding and proper assembly of unfolded polypeptides generated under stress conditions in the mitochondrial matrix. The protein is Chaperonin CPN60-2, mitochondrial (CPN60-2) of Cucurbita maxima (Pumpkin).